We begin with the raw amino-acid sequence, 394 residues long: Aspergillopepsin-1 (394 aa).

The N-terminal stretch at Met1–Ala20 is a signal peptide. The propeptide at Ala21–Ala69 is activation peptide. The Peptidase A1 domain maps to Tyr85–Ala391. The active site involves Asp101. O-linked (Man...) serine glycosylation is found at Ser129 and Ser304. A disulfide bond links Cys319 and Cys354.

It belongs to the peptidase A1 family. As to quaternary structure, monomer.

Its subcellular location is the secreted. It catalyses the reaction Hydrolysis of proteins with broad specificity. Generally favors hydrophobic residues in P1 and P1', but also accepts Lys in P1, which leads to activation of trypsinogen. Does not clot milk.. In terms of biological role, secreted aspartic endopeptidase that allows assimilation of proteinaceous substrates. The scissile peptide bond is attacked by a nucleophilic water molecule activated by two aspartic residues in the active site. Shows a broad primary substrate specificity. Favors hydrophobic residues at the P1 and P1' positions, but also accepts a lysine residue in the P1 position, leading to the activation of trypsinogen and chymotrypsinogen A. The chain is Aspergillopepsin-1 (pepA) from Aspergillus phoenicis (Aspergillus saitoi).